A 736-amino-acid polypeptide reads, in one-letter code: Segment polarity protein dishevelled homolog DVL-2 (736 aa).

A DIX domain is found at 1 to 82; it reads MAETKVIYHL…RVVSWLASSE (82 aa). A disordered region spans residues 79–241; that stretch reads ASSEGSQPDS…PRLERTSSFS (163 aa). Positions 100-114 are enriched in pro residues; it reads EPPPPVPPPIPPPPA. Over residues 149 to 160 the composition is skewed to basic and acidic residues; that stretch reads MRRDRVRRRESS. Residues 181 to 195 are compositionally biased toward low complexity; it reads ESSSTLLTSEIETSI. The segment covering 205–217 has biased composition (polar residues); the sequence is SRFSSSTEQSSAS. Residues 219-231 are compositionally biased toward basic residues; that stretch reads LLKRHRRRRKQRP. One can recognise a PDZ domain in the interval 254-326; it reads TVTLNMEKYN…NDDAVRVLRD (73 aa). The tract at residues 327-427 is interaction with custos; sequence IVHKPGPIVL…LASVVKVMAS (101 aa). Positions 428 to 502 constitute a DEP domain; sequence PESGLEVRDR…SEQCYYIFGD (75 aa). 2 stretches are compositionally biased toward low complexity: residues 574–593 and 616–629; these read MGSA…SNRS and KSGS…STRS. The disordered stretch occupies residues 574–664; that stretch reads MGSAGSQHSE…HPPSVHSYAA (91 aa).

Belongs to the DSH family. Can form homomultimers. Interacts with prickle1. Interacts (via PDZ domain) with ccdc88c/dal and dact1-B/dpr. Interacts (via DIX domain) with ARP/Axin-related protein and dact1-A/frodo. Interacts with sdc4, possibly via fz7. Interacts directly (via DEP domain) with efnb1/ephrin-B1 and indirectly with the phosphorylated ephrin receptors ephb1 and ephb2, via association with SH domain-containing adapters. May interact with lrrc6. Interacts with custos (via NLS1 and NLS2); the interaction is negatively regulated by Wnt stimulation. In terms of processing, phosphorylated. Phosphorylation is controlled by frizzled proteins, correlates with the onset of embryo dorsalizing events and is higher in the dorsal half of early cleavage embryos. Phosphorylated on tyrosine residues in response to association with efnb1/ephrin-B1. In terms of tissue distribution, expressed equally in both animal-vegetal and dorsal-ventral directions of the early blastula. Becomes enriched on the dorsal side of the embryo after cortical rotation. Expressed along the anterior margin of eye field of neurulae (stage 16 embryos) and in the anterolateral crescent that borders the eye field. Continues to be expressed in the optic cup at stage 26. Expressed in the central nervous system throughout the early tailbud stage including the entire hindbrain.

The protein resides in the cytoplasm. It is found in the cytoplasmic vesicle. It localises to the cell projection. Its subcellular location is the cilium. The protein localises to the nucleus. The protein resides in the cell membrane. Its function is as follows. Involved in at least 2 independent signaling cascades, controlling cell fate via canonical Wnt signaling and cell polarity via a planar cell polarity (PCP) cascade. Acts synergistically with dal/dapple-like to activate Wnt signaling, stabilizing ctnnb1/beta-catenin and leading to dorsal axis formation. Also prevents degradation of ctnnb1/beta-catenin by displacing gsk3 from a complex with ARP/Axin-related protein. Has an additional role in anterior-posterior (A/P) axis formation, specifying different neuroectodermal cell fates along the A/P axis in a dose-dependent manner by activating several early patterning genes. In the PCP pathway, required at the cell membrane for PCP-mediated neural and mesodermal convergent extension during gastrulation and subsequent neural tube closure, acting to activate jnk. Also involved in blastopore closure and archenteron elongation during early, but not late, gastrulation. Associates with ephrin receptors and ligands and acts as part of a downstream PCP pathway to mediate ephrin-mediated cell repulsion via activation of rhoa. Required for efnb1/ephrin-B1-driven movement of non-retinal progenitor cells into the retina during eye field formation. Patterns the hindbrain. Required for ciliogenesis. Controls the docking of basal bodies to the apical plasma membrane; mediates the activation, but not localization of rhoa at the apical surface of ciliated cells during basal body docking. Furthermore, required for the association of basal bodies with membrane-bound vesicles and the vesicle-trafficking protein exoc4/sec8, and this association is in turn required for basal body docking. Once basal bodies are docked, required for the planar polarization of basal bodies that underlies ciliary beating and the directional fluid flow across ciliated epithelia. This is Segment polarity protein dishevelled homolog DVL-2 (dvl2) from Xenopus laevis (African clawed frog).